The primary structure comprises 110 residues: MSLTEARFHDLVDSTQQALEDIFDDSGLDVDLENSAGVLTVKFESGQQLIFSRQEPLRQLWLAARSGGVHFDYDEESGKWQCDKSEELLSEMLARLVSEYTGADLDFDEI.

This sequence belongs to the frataxin family.

Functionally, involved in iron-sulfur (Fe-S) cluster assembly. May act as a regulator of Fe-S biogenesis. The sequence is that of Iron-sulfur cluster assembly protein CyaY from Pseudomonas fluorescens (strain SBW25).